We begin with the raw amino-acid sequence, 178 residues long: MSRIGKEPITIPSGVETKIDGQLVEVKGPKGTLNVNVPEPISVAVEDGKIVVTRPDDHRTNRSLHGLSRSLVNNLVVGVTEGYTIKMEIFGVGYRVALKGKDLEFSLGYSHPVLIEASEGITFAVDGNTKLSVSGIDKQKVGQVAAVIRRLRKDDPYKGKGIRYEGEQIRRKVGKTGK.

It belongs to the universal ribosomal protein uL6 family. Part of the 50S ribosomal subunit.

This protein binds to the 23S rRNA, and is important in its secondary structure. It is located near the subunit interface in the base of the L7/L12 stalk, and near the tRNA binding site of the peptidyltransferase center. The protein is Large ribosomal subunit protein uL6 of Corynebacterium glutamicum (strain R).